The sequence spans 311 residues: Malate dehydrogenase (311 aa).

NAD(+)-binding positions include 7–13 (GAAGGIG) and D34. Residues R81 and R87 each coordinate substrate. Residues N94 and 117 to 119 (ITN) each bind NAD(+). The substrate site is built by N119 and R153. H177 serves as the catalytic Proton acceptor. M227 is a binding site for NAD(+).

The protein belongs to the LDH/MDH superfamily. MDH type 1 family. In terms of assembly, homodimer.

The catalysed reaction is (S)-malate + NAD(+) = oxaloacetate + NADH + H(+). Its function is as follows. Catalyzes the reversible oxidation of malate to oxaloacetate. The chain is Malate dehydrogenase from Haemophilus influenzae (strain PittEE).